The chain runs to 944 residues: ATP-dependent RNA helicase DDX42 (944 aa).

The span at 1 to 18 shows a compositional bias: gly residues; it reads MNWNKGGPGTKRGFGFGG. 3 disordered regions span residues 1–119, 131–155, and 182–203; these read MNWN…LEAF, MKRL…EEED, and EYDS…LPPI. Residues 35–52 are compositionally biased toward low complexity; it reads SHSAFGTAGSSAAFAKSG. The segment covering 70 to 84 has biased composition (acidic residues); that stretch reads DEENAYFEDEEEDNS. Residues 120-157 adopt a coiled-coil conformation; the sequence is MAEVEDQAARDMKRLEDKDKEKKNAKGIRDDIEEEDDQ. The span at 131–149 shows a compositional bias: basic and acidic residues; it reads MKRLEDKDKEKKNAKGIRD. A Q motif motif is present at residues 253–281; that stretch reads SSFARFGFDEQLMHQIRKSEYTQPTPIQC. A Helicase ATP-binding domain is found at 284-459; it reads VPVAMSGRDM…RDILIDPIRV (176 aa). 297–304 is a binding site for ATP; that stretch reads AKTGSGKT. Residues 407–410 carry the DEAD box motif; that stretch reads DEAD. The region spanning 487 to 632 is the Helicase C-terminal domain; the sequence is WLTRRLVEFT…HVSKELLDLA (146 aa). Disordered stretches follow at residues 642–682, 723–753, and 794–944; these read RFKG…VMSN, GSSA…AANP, and SANA…RWDS. The segment covering 723 to 737 has biased composition (low complexity); the sequence is GSSAAGASGWTSAGS. The span at 738–752 shows a compositional bias: polar residues; the sequence is LNSVPTSSAQQNAAN. Residues 794–814 are compositionally biased toward low complexity; the sequence is SANASAGNREGVGSAGSAPRG. Residues 815–824 are compositionally biased toward gly residues; the sequence is GSSGGGGGGI. Basic and acidic residues-rich tracts occupy residues 825–887 and 901–926; these read VRER…RHFT and NISE…DNKT.

The protein belongs to the DEAD box helicase family. DDX42 subfamily. As to quaternary structure, transient component of the SF3B subcomplex of the 17S U2 SnRNP complex.

It is found in the cytoplasm. The protein resides in the nucleus. It catalyses the reaction ATP + H2O = ADP + phosphate + H(+). In terms of biological role, ATP-dependent RNA helicase that binds to partially double-stranded RNAs (dsRNAs) in order to unwind RNA secondary structures. Unwinding is promoted in the presence of single-strand binding proteins. Also mediates RNA duplex formation thereby displacing the single-strand RNA binding protein. ATP and ADP modulate its activity: ATP binding and hydrolysis by DDX42 triggers RNA strand separation, whereas the ADP-bound form of the protein triggers annealing of complementary RNA strands. Required for assembly of the 17S U2 SnRNP complex of the spliceosome, a large ribonucleoprotein complex that removes introns from transcribed pre-mRNAs: DDX42 associates transiently with the SF3B subcomplex of the 17S U2 SnRNP complex and is released after fulfilling its role in the assembly of 17S U2 SnRNP. The protein is ATP-dependent RNA helicase DDX42 (DDX42) of Gallus gallus (Chicken).